The following is an 849-amino-acid chain: MKGVDDAFLGVGDKPGLDIWCIMGSNLIAIEKSLHGKFYTGNTYIILSTVELKSGVRQHNVHYWVGEEAKEEDCLTASDKAIELDVALGSNTVQYRETQGEESDKFLSYFKPCIIPIQGSLSSHMRIYGDKSKDTTMFRCEGEHVARVTEVPFSRSSLDHKAVFVVDTESKIFLFSGCNSSMQTRAKALDVVKHLKENRHCGRCEIATIEDGKLVGDSDAGDFWNLFGGYAPIPRDVQDTVMTELMTTSSKKLFWINKRNLVPVETNLLEREMLNSDRNYILDCGTEVFLWMGMTTLVSERRTSVTALEDYVRCEGRQSNARSVILTEGHETVEFKMHFQHWPKNAVPKLYEAGREKVAAIFKHQGYDVTEIPEDKPRHFISCNGSLKVWLVDNGSVTLLCTEEQEQLYNGDCYIIRYSYIEDGKDYHLFFAWSGLNSINEDRVAAASLMSGMIDSVKGHAVVAQVFEGREPEMFFLVFKSLIIFKGGRSMAYKNFVSQRSDANGWYQKNGVALFRVQGLKHDCIRAIQVDLAASSLNSSHCYILQAGGSFFTWLGSLSSPSDHNLLDRMMDKLCPLKQSLLVREGSEPDRFWEALGGRSEYLREKQVKDWPADPHLYTCHFEQGLFKAKEVFSFSQDDLVTEEILILDCVEELHIWVGHQSGVLSKEQALDIGKMFLQAGIHQDGRRPIDTTMYIVTEGDEPRFFTSFFNWDYSKQTMLGNSFERKLAILKGISQKLETPERSLRKSSSSSLPRRSPGTSSSEPTTPEQRAAARTFASASTGKLLRERSPAALSPSLSTPSPSPRSRSSASSSPASWNSTPSTVARRLFPPSLHASAEAVATGTPRRR.

Gelsolin-like repeat units follow at residues Ile-30–Leu-107, Arg-147–Lys-213, Val-262–Phe-335, Gln-405–Phe-475, and Ala-527–Leu-566. The disordered stretch occupies residues Glu-739–Arg-849. Low complexity-rich tracts occupy residues Lys-747–Thr-782 and Pro-791–Ser-823.

It belongs to the villin/gelsolin family. In terms of tissue distribution, expressed in roots, young leaves, and inflorescences, mostly in the vasculature of roots, leaves, and filaments of the anthers. Also detected in guard cells.

Its subcellular location is the cytoplasm. The protein resides in the cytoskeleton. Functionally, ca(2+)-independent actin-binding protein. Binds actin microfilaments (MFs). Involved in actin filament bundling, severing and capping. Caps the barbed end of actin filaments and protects them from disassembly. Promotes VLN3-mediated MF severing. The chain is Villin-1 from Oryza sativa subsp. japonica (Rice).